A 497-amino-acid polypeptide reads, in one-letter code: 4,4'-diapolycopene oxygenase (497 aa).

It belongs to the carotenoid/retinoid oxidoreductase family. FAD serves as cofactor.

It catalyses the reaction all-trans-4,4'-diapolycopene + 4 AH2 + 4 O2 = all-trans-4,4'-diapolycopene-4,4'-dial + 4 A + 6 H2O. It carries out the reaction all-trans-4,4'-diaponeurosporene + 2 AH2 + 2 O2 = 4,4'-diaponeurosporenal + 2 A + 3 H2O. It participates in carotenoid biosynthesis. Functionally, involved in the biosynthesis of C30 carotenoids. Catalyzes the oxidation of the terminal methyl side groups of 4,4'-diapolycopene to yield 4,4'-diapolycopen-4,4'-dial via the aldehyde intermediate 4,4'-diapolycopen-al. Also able to catalyze the oxidation of the terminal methyl side group of 4,4'-diaponeurosporene to form 4,4'-diaponeurosporen-4-al. It has moderate to low activity on the C40 substrates neurosporene and lycopene, and has no detectable activity on zeta-carotene or beta-carotene. The polypeptide is 4,4'-diapolycopene oxygenase (Methylomonas sp).